The chain runs to 406 residues: Probable 2,3-bisphosphoglycerate-independent phosphoglycerate mutase (406 aa).

It belongs to the BPG-independent phosphoglycerate mutase family. A-PGAM subfamily.

It catalyses the reaction (2R)-2-phosphoglycerate = (2R)-3-phosphoglycerate. The protein operates within carbohydrate degradation; glycolysis; pyruvate from D-glyceraldehyde 3-phosphate: step 3/5. Its function is as follows. Catalyzes the interconversion of 2-phosphoglycerate and 3-phosphoglycerate. This chain is Probable 2,3-bisphosphoglycerate-independent phosphoglycerate mutase, found in Thermus thermophilus (strain ATCC BAA-163 / DSM 7039 / HB27).